The following is a 95-amino-acid chain: Small ribosomal subunit protein bS6 (95 aa).

It belongs to the bacterial ribosomal protein bS6 family. In terms of assembly, part of the 30S ribosomal subunit.

Functionally, binds together with bS18 to 16S ribosomal RNA. In Bacillus subtilis (strain 168), this protein is Small ribosomal subunit protein bS6 (rpsF).